Reading from the N-terminus, the 264-residue chain is Thymidylate synthase (264 aa).

Arginine 21 contacts dUMP. Residue histidine 51 coordinates (6R)-5,10-methylene-5,6,7,8-tetrahydrofolate. DUMP is bound at residue 126–127; it reads RR. The Nucleophile role is filled by cysteine 146. Residues 166–169, asparagine 177, and 207–209 each bind dUMP; these read RSCD and HLY. Aspartate 169 is a binding site for (6R)-5,10-methylene-5,6,7,8-tetrahydrofolate. A (6R)-5,10-methylene-5,6,7,8-tetrahydrofolate-binding site is contributed by alanine 263.

It belongs to the thymidylate synthase family. Bacterial-type ThyA subfamily. In terms of assembly, homodimer.

It is found in the cytoplasm. It catalyses the reaction dUMP + (6R)-5,10-methylene-5,6,7,8-tetrahydrofolate = 7,8-dihydrofolate + dTMP. It participates in pyrimidine metabolism; dTTP biosynthesis. In terms of biological role, catalyzes the reductive methylation of 2'-deoxyuridine-5'-monophosphate (dUMP) to 2'-deoxythymidine-5'-monophosphate (dTMP) while utilizing 5,10-methylenetetrahydrofolate (mTHF) as the methyl donor and reductant in the reaction, yielding dihydrofolate (DHF) as a by-product. This enzymatic reaction provides an intracellular de novo source of dTMP, an essential precursor for DNA biosynthesis. This chain is Thymidylate synthase, found in Escherichia fergusonii (strain ATCC 35469 / DSM 13698 / CCUG 18766 / IAM 14443 / JCM 21226 / LMG 7866 / NBRC 102419 / NCTC 12128 / CDC 0568-73).